The sequence spans 102 residues: Small ribosomal subunit protein eS24 (102 aa).

The protein belongs to the eukaryotic ribosomal protein eS24 family.

The sequence is that of Small ribosomal subunit protein eS24 from Methanococcus maripaludis (strain C5 / ATCC BAA-1333).